A 281-amino-acid chain; its full sequence is Pantothenate synthetase (281 aa).

Residue 30-37 (MGYLHEGH) participates in ATP binding. Residue histidine 37 is the Proton donor of the active site. Glutamine 61 serves as a coordination point for (R)-pantoate. Glutamine 61 contributes to the beta-alanine binding site. ATP is bound at residue 147 to 150 (GEKD). (R)-pantoate is bound at residue glutamine 153. ATP-binding positions include isoleucine 176 and 184–187 (KSSR).

This sequence belongs to the pantothenate synthetase family. In terms of assembly, homodimer.

It localises to the cytoplasm. It catalyses the reaction (R)-pantoate + beta-alanine + ATP = (R)-pantothenate + AMP + diphosphate + H(+). Its pathway is cofactor biosynthesis; (R)-pantothenate biosynthesis; (R)-pantothenate from (R)-pantoate and beta-alanine: step 1/1. Its function is as follows. Catalyzes the condensation of pantoate with beta-alanine in an ATP-dependent reaction via a pantoyl-adenylate intermediate. This chain is Pantothenate synthetase, found in Clostridium botulinum (strain Kyoto / Type A2).